Reading from the N-terminus, the 321-residue chain is Cytochrome f (321 aa).

Positions methionine 1–alanine 35 are cleaved as a signal peptide. The heme site is built by tyrosine 36, cysteine 56, cysteine 59, and histidine 60. The chain crosses the membrane as a helical span at residues isoleucine 287 to leucine 306.

It belongs to the cytochrome f family. As to quaternary structure, the 4 large subunits of the cytochrome b6-f complex are cytochrome b6, subunit IV (17 kDa polypeptide, petD), cytochrome f and the Rieske protein, while the 4 small subunits are PetG, PetL, PetM and PetN. The complex functions as a dimer. Heme is required as a cofactor.

The protein resides in the plastid. The protein localises to the chloroplast thylakoid membrane. Functionally, component of the cytochrome b6-f complex, which mediates electron transfer between photosystem II (PSII) and photosystem I (PSI), cyclic electron flow around PSI, and state transitions. In Psilotum nudum (Whisk fern), this protein is Cytochrome f.